Here is a 375-residue protein sequence, read N- to C-terminus: Histidine biosynthesis bifunctional protein HisB (375 aa).

The histidinol-phosphatase stretch occupies residues 1-168; it reads MTPILFVDRD…GIAHELADAP (168 aa). Residue aspartate 8 is the Nucleophile of the active site. Residues aspartate 8, aspartate 10, and aspartate 128 each coordinate Mg(2+). The Proton donor role is filled by aspartate 10. The tract at residues 169–375 is imidazoleglycerol-phosphate dehydratase; it reads RRAVVQRNTK…TALPTTKGAL (207 aa).

It in the N-terminal section; belongs to the histidinol-phosphatase family. The protein in the C-terminal section; belongs to the imidazoleglycerol-phosphate dehydratase family. It depends on Mg(2+) as a cofactor.

The protein localises to the cytoplasm. It catalyses the reaction D-erythro-1-(imidazol-4-yl)glycerol 3-phosphate = 3-(imidazol-4-yl)-2-oxopropyl phosphate + H2O. It carries out the reaction L-histidinol phosphate + H2O = L-histidinol + phosphate. It participates in amino-acid biosynthesis; L-histidine biosynthesis; L-histidine from 5-phospho-alpha-D-ribose 1-diphosphate: step 6/9. Its pathway is amino-acid biosynthesis; L-histidine biosynthesis; L-histidine from 5-phospho-alpha-D-ribose 1-diphosphate: step 8/9. This chain is Histidine biosynthesis bifunctional protein HisB, found in Xanthomonas euvesicatoria pv. vesicatoria (strain 85-10) (Xanthomonas campestris pv. vesicatoria).